The chain runs to 176 residues: Probable chemoreceptor glutamine deamidase CheD (176 aa).

This sequence belongs to the CheD family.

It catalyses the reaction L-glutaminyl-[protein] + H2O = L-glutamyl-[protein] + NH4(+). Its function is as follows. Probably deamidates glutamine residues to glutamate on methyl-accepting chemotaxis receptors (MCPs), playing an important role in chemotaxis. This Rhodospirillum rubrum (strain ATCC 11170 / ATH 1.1.1 / DSM 467 / LMG 4362 / NCIMB 8255 / S1) protein is Probable chemoreceptor glutamine deamidase CheD.